Here is a 347-residue protein sequence, read N- to C-terminus: MRAVVVVTGLVVVVVTTTLSLQDHDVKSASSPLSSSVDQGSSGDDCDEGLPPPDQPFRVVWNHPDNCEKINLHLPLDEYGIIFNKRRVFLGEEIQTLYDTGPWPYINKTGCFINGGLPQLFNQPDNSETCKILGKNRIEDFTGLGVLDFETWRAIYSTNFGTMENYQIESVNLVRKRHPDYSEKELKMVAEQEWQEAARKIMTDKLAAGQSLMPRGYWGYYLYPRTWDSKPDTKFRNNKIDWLWRQSTGLYPSIYIYYDVVSKTDSVITKFVSDTVGEAVRVQNDFSPPNTPIYPYVMFQTMDNVFHKEDHMKISLGLSAKMGAAGVILWGSSQNYKDFTTQCSRLQ.

The N-terminal stretch at 1-18 (MRAVVVVTGLVVVVVTTT) is a signal peptide. A propeptide spanning residues 19-33 (LSLQDHDVKSASSPL) is cleaved from the precursor. Residues 27–49 (KSASSPLSSSVDQGSSGDDCDEG) are disordered. Over residues 28 to 43 (SASSPLSSSVDQGSSG) the composition is skewed to low complexity. A disulfide bridge links Cys67 with Cys343. Residue Glu150 is the Proton donor of the active site.

This sequence belongs to the glycosyl hydrolase 56 family. In terms of processing, contains 4 disulfide bonds. Is N-linked glycosylated at three positions. As to expression, expressed by the venom duct.

It localises to the secreted. It catalyses the reaction Random hydrolysis of (1-&gt;4)-linkages between N-acetyl-beta-D-glucosamine and D-glucuronate residues in hyaluronate.. Functionally, hyaluronidase catalyzes the hydrolysis of hyaluronic acid (HA), an anionic, nonsulfated glycosaminoglycan distributed widely throughout connective, epithelial, and neural tissues. In venom, they are known to enhance diffusion of the venom by degrading the extracellular matrix. The protein is Hyaluronidase conohyal-ad1 of Conus adamsonii (Rhododendron cone).